A 163-amino-acid polypeptide reads, in one-letter code: Phosphopantetheine adenylyltransferase (163 aa).

Ser11 is a substrate binding site. Residues 11–12 (SF) and His19 contribute to the ATP site. Positions 43, 76, and 90 each coordinate substrate. ATP contacts are provided by residues 91–93 (GLR), Glu101, and 126–132 (WQALSSS).

The protein belongs to the bacterial CoaD family. As to quaternary structure, homohexamer. Requires Mg(2+) as cofactor.

The protein resides in the cytoplasm. The catalysed reaction is (R)-4'-phosphopantetheine + ATP + H(+) = 3'-dephospho-CoA + diphosphate. It functions in the pathway cofactor biosynthesis; coenzyme A biosynthesis; CoA from (R)-pantothenate: step 4/5. Functionally, reversibly transfers an adenylyl group from ATP to 4'-phosphopantetheine, yielding dephospho-CoA (dPCoA) and pyrophosphate. The sequence is that of Phosphopantetheine adenylyltransferase from Streptococcus pyogenes serotype M2 (strain MGAS10270).